Reading from the N-terminus, the 344-residue chain is L-rhamnose-proton symporter (344 aa).

10 helical membrane passes run 4 to 24 (AITM…CFYA), 38 to 58 (WSVG…ALLL), 68 to 88 (FSLS…IGNI), 101 to 121 (MGIG…TPII), 137 to 157 (TLLG…AGQL), 175 to 195 (LVLA…MNAA), 214 to 234 (LPSY…FCFI), 259 to 279 (VLLS…YAWG), 290 to 310 (ISWM…GLVL), and 323 to 343 (VLSL…IGMA).

Belongs to the L-rhamnose transporter (TC 2.A.7.6) family.

It localises to the cell inner membrane. It carries out the reaction L-rhamnopyranose(in) + H(+)(in) = L-rhamnopyranose(out) + H(+)(out). Functionally, uptake of L-rhamnose across the cytoplasmic membrane with the concomitant transport of protons into the cell (symport system). The sequence is that of L-rhamnose-proton symporter from Escherichia coli (strain 55989 / EAEC).